Consider the following 480-residue polypeptide: MTQKNTGPRRRTAVACDRCRRRKIRCTGSDIPGQPCLACQKAHADCHFSTTSWRACRKKSAPLHCPSTNGKTNVLPSYASTPSLSPMTSSHFPYASDGTLISATNHCDDCSYNPHYLPVNSNGSSPSHTSSLDSIPGYASGSGPFKTPYRPVAVSESSSRSSFSMGSSEFASSTWSQSPMQSSLYVSPSSQPLDRFSPASFPSKETLTSSSLSSSVPRSVSLSNFADSNTSNYPESSLLPAAKVGNNGFVGSNVLGSMSYSNVEDSVRFQTDSVSQMSSKSLEHLPMLSEMTLSSSASFGASVSPKSTPGSNSTGAAVDTNSVHSNGGSDLDYSSYLTDSSAVDSPSLDADEVLRSFNLANDPIGAVDPLTLEIDQGSGSQLLGQQSFANDSLNAKQSSGKLGPLPPQSFNSSDYISFDEPSRYLSDDASLWPDQYVDKVQPLATMKTCNPAVFSSNTSLDDMFFFIRDFDEDHPIQTAY.

A DNA-binding region (zn(2)-C6 fungal-type) is located at residues 16–46; it reads CDRCRRRKIRCTGSDIPGQPCLACQKAHADC. Residues 298-307 are compositionally biased toward low complexity; it reads SFGASVSPKS. Residues 298 to 325 form a disordered region; that stretch reads SFGASVSPKSTPGSNSTGAAVDTNSVHS. Residues 308–325 show a composition bias toward polar residues; it reads TPGSNSTGAAVDTNSVHS.

It is found in the cytoplasm. The protein resides in the nucleus. This is an uncharacterized protein from Schizosaccharomyces pombe (strain 972 / ATCC 24843) (Fission yeast).